The following is a 526-amino-acid chain: ATP synthase subunit alpha (526 aa).

171 to 178 (GDRQTGKT) provides a ligand contact to ATP.

The protein belongs to the ATPase alpha/beta chains family. F-type ATPases have 2 components, CF(1) - the catalytic core - and CF(0) - the membrane proton channel. CF(1) has five subunits: alpha(3), beta(3), gamma(1), delta(1), epsilon(1). CF(0) has four main subunits: a(1), b(1), b'(1) and c(9-12).

Its subcellular location is the cell inner membrane. The enzyme catalyses ATP + H2O + 4 H(+)(in) = ADP + phosphate + 5 H(+)(out). In terms of biological role, produces ATP from ADP in the presence of a proton gradient across the membrane. The alpha chain is a regulatory subunit. In Chlorobium phaeobacteroides (strain DSM 266 / SMG 266 / 2430), this protein is ATP synthase subunit alpha.